The primary structure comprises 172 residues: 6,7-dimethyl-8-ribityllumazine synthase (172 aa).

5-amino-6-(D-ribitylamino)uracil-binding positions include phenylalanine 22 and alanine 56 to glutamate 58. Leucine 78–glycine 79 lines the (2S)-2-hydroxy-3-oxobutyl phosphate pocket. A 5-amino-6-(D-ribitylamino)uracil-binding site is contributed by alanine 80 to isoleucine 82. The active-site Proton donor is the histidine 88. A 5-amino-6-(D-ribitylamino)uracil-binding site is contributed by phenylalanine 113. Residue arginine 127 coordinates (2S)-2-hydroxy-3-oxobutyl phosphate.

The protein belongs to the DMRL synthase family.

It carries out the reaction (2S)-2-hydroxy-3-oxobutyl phosphate + 5-amino-6-(D-ribitylamino)uracil = 6,7-dimethyl-8-(1-D-ribityl)lumazine + phosphate + 2 H2O + H(+). It functions in the pathway cofactor biosynthesis; riboflavin biosynthesis; riboflavin from 2-hydroxy-3-oxobutyl phosphate and 5-amino-6-(D-ribitylamino)uracil: step 1/2. Its function is as follows. Catalyzes the formation of 6,7-dimethyl-8-ribityllumazine by condensation of 5-amino-6-(D-ribitylamino)uracil with 3,4-dihydroxy-2-butanone 4-phosphate. This is the penultimate step in the biosynthesis of riboflavin. This is 6,7-dimethyl-8-ribityllumazine synthase from Protochlamydia amoebophila (strain UWE25).